We begin with the raw amino-acid sequence, 118 residues long: Hydrogenase maturation factor HypA (118 aa).

His-2 is a Ni(2+) binding site. Cys-74, Cys-77, Cys-91, and Cys-94 together coordinate Zn(2+).

The protein belongs to the HypA/HybF family.

Involved in the maturation of [NiFe] hydrogenases. Required for nickel insertion into the metal center of the hydrogenase. The protein is Hydrogenase maturation factor HypA of Helicobacter hepaticus (strain ATCC 51449 / 3B1).